The following is a 514-amino-acid chain: Membrane-bound lytic murein transglycosylase F (514 aa).

Positions 1–30 (MKKLKINYLFIGILTLLLAAALWPSIPWFG) are cleaved as a signal peptide. The interval 31 to 269 (KTENHIAAIQ…RIEEKYLGHG (239 aa)) is non-LT domain. The tract at residues 270–514 (DDFDYVDTRS…LFTPQKKEEK (245 aa)) is LT domain. Residue Glu314 is part of the active site.

This sequence in the N-terminal section; belongs to the bacterial solute-binding protein 3 family. It in the C-terminal section; belongs to the transglycosylase Slt family.

It localises to the cell outer membrane. The enzyme catalyses Exolytic cleavage of the (1-&gt;4)-beta-glycosidic linkage between N-acetylmuramic acid (MurNAc) and N-acetylglucosamine (GlcNAc) residues in peptidoglycan, from either the reducing or the non-reducing ends of the peptidoglycan chains, with concomitant formation of a 1,6-anhydrobond in the MurNAc residue.. Functionally, murein-degrading enzyme that degrades murein glycan strands and insoluble, high-molecular weight murein sacculi, with the concomitant formation of a 1,6-anhydromuramoyl product. Lytic transglycosylases (LTs) play an integral role in the metabolism of the peptidoglycan (PG) sacculus. Their lytic action creates space within the PG sacculus to allow for its expansion as well as for the insertion of various structures such as secretion systems and flagella. In Salmonella paratyphi B (strain ATCC BAA-1250 / SPB7), this protein is Membrane-bound lytic murein transglycosylase F.